The sequence spans 88 residues: Large ribosomal subunit protein bL27 (88 aa).

The segment at 1–24 (MAHKKGTGSTRNGRDSNSKRLGVK) is disordered.

It belongs to the bacterial ribosomal protein bL27 family.

This is Large ribosomal subunit protein bL27 from Synechococcus sp. (strain CC9311).